Reading from the N-terminus, the 496-residue chain is Aspartic proteinase (496 aa).

Positions 1 to 24 (MAKRHLLLVTTCLWALSCALLLHA) are cleaved as a signal peptide. Positions 25 to 59 (SSDGFLRVNLNKKRLDKEDLTAAKLAQQGNRLLKT) are cleaved as a propeptide — activation peptide. The Peptidase A1 domain maps to 77 to 493 (YYGVIGLGSP…DFGKDRIGFA (417 aa)). Asp95 is a catalytic residue. Intrachain disulfides connect Cys108/Cys114 and Cys273/Cys277. Residue Asp282 is part of the active site. The region spanning 307–407 (IISTECKEVV…NQLCERLPSP (101 aa)) is the Saposin B-type domain. 4 disulfides stabilise this stretch: Cys312–Cys401, Cys337–Cys373, Cys343–Cys370, and Cys415–Cys452. Residue Asn387 is glycosylated (N-linked (GlcNAc...) asparagine).

Belongs to the peptidase A1 family.

It is found in the vacuole. Functionally, involved in the breakdown of propeptides of storage proteins in protein-storage vacuoles. This chain is Aspartic proteinase (RAP), found in Oryza sativa subsp. japonica (Rice).